Reading from the N-terminus, the 459-residue chain is Protein ABHD15 (459 aa).

An N-terminal signal peptide occupies residues 1 to 28 (MPPWAAALALLLAALALLLLRPWKRAVG). Catalysis depends on charge relay system residues aspartate 351 and histidine 382. Serine 425 bears the Phosphoserine mark.

This sequence belongs to the AB hydrolase superfamily. AB hydrolase 4 family. Interacts with PDE3B; this interaction regulates PDE3B's stability and expression and, thereby, impacts the antilipolytic action of insulin. Mainly expressed in adipocytes and adipose depots, followed by a weak expression in liver and pancreas. In white adipose tissue (WAT), only expressed in mature adipocytes and primary adipocytes differentiated from stromal vascular cells (SVCs), but not in undifferentiated SVCs.

Its subcellular location is the secreted. In terms of biological role, may regulate adipocyte lipolysis and liver lipid accumulation. This Mus musculus (Mouse) protein is Protein ABHD15.